Reading from the N-terminus, the 706-residue chain is Cyclic nucleotide-gated ion channel 18 (706 aa).

The Cytoplasmic segment spans residues 1–53; the sequence is MNKIRSLRCLLPETITSASTAASNRGSDGSQFSVLWRHQILDPDSNIVTYWNH. Residues 54–74 traverse the membrane as a helical segment; it reads VFLITSILALFLDPFYFYVPY. At 75–86 the chain is on the extracellular side; it reads VGGPACLSIDIS. Residues 87–107 traverse the membrane as a helical segment; it reads LAATVTFFRTVADIFHLLHIF. Residues 108–142 lie on the Cytoplasmic side of the membrane; that stretch reads MKFRTAFVARSSRVFGRGELVMDSREIAMRYLKTD. The helical transmembrane segment at 143–163 threads the bilayer; that stretch reads FLIDVAAMLPLPQLVIWLVIP. Residues 164 to 174 are Extracellular-facing; that stretch reads AATNGTANHAN. A helical transmembrane segment spans residues 175–195; the sequence is STLALIVLVQYIPRSFIIFPL. Topologically, residues 196 to 217 are cytoplasmic; sequence NQRIIKTTGFIAKTAWAGAAYN. A helical transmembrane segment spans residues 218-238; it reads LLLYILASHVLGAMWYLSSIG. Residues 239–345 are Extracellular-facing; it reads RQFSCWSNVC…ITTSVYLGET (107 aa). Residues 346-366 traverse the membrane as a helical segment; it reads LFCITICIFGLILFTLLIGNM. The Cytoplasmic portion of the chain corresponds to 367–706; it reads QSSLQSMSVR…PDFSIDKEDV (340 aa). Residues 449 to 579 and glutamate 520 each bind a nucleoside 3',5'-cyclic phosphate; that span reads FFSQ…AFRY. The tract at residues 565–580 is calmodulin-binding; sequence FKRLQSKKLQHAFRYY. In terms of domain architecture, IQ spans 585–614; sequence RAWGACFVQSAWRRYKRRKLAKELSLHESS. The segment at 661-706 is disordered; sequence ANTRRGTNQKASSSSTGKKDGSSTSLKMPQLFKPDEPDFSIDKEDV. The span at 693–706 shows a compositional bias: basic and acidic residues; that stretch reads KPDEPDFSIDKEDV.

It belongs to the cyclic nucleotide-gated cation channel (TC 1.A.1.5) family. As to quaternary structure, homomultimer. Interacts with CPK32. In terms of tissue distribution, expressed in pollen grains. Not detected in leaves, roots or root hairs.

It localises to the cell membrane. It is found in the cytoplasmic vesicle membrane. Its function is as follows. Cyclic nucleotide-gated ion channel required for directional pollen tube growth into the transmitting tract. Acts as a Ca(2+)-permeable divalent cation-selective channel inhibited by either lanthanum or gadolinium. Regulated by CPK32 to mediate Ca(2+) transport across the plasma membrane in response to Ca(2+) oscillation. The protein is Cyclic nucleotide-gated ion channel 18 of Arabidopsis thaliana (Mouse-ear cress).